The primary structure comprises 355 residues: Histidinol-phosphate aminotransferase (355 aa).

Position 218 is an N6-(pyridoxal phosphate)lysine (Lys-218).

It belongs to the class-II pyridoxal-phosphate-dependent aminotransferase family. Histidinol-phosphate aminotransferase subfamily. As to quaternary structure, homodimer. Requires pyridoxal 5'-phosphate as cofactor.

It carries out the reaction L-histidinol phosphate + 2-oxoglutarate = 3-(imidazol-4-yl)-2-oxopropyl phosphate + L-glutamate. It participates in amino-acid biosynthesis; L-histidine biosynthesis; L-histidine from 5-phospho-alpha-D-ribose 1-diphosphate: step 7/9. The sequence is that of Histidinol-phosphate aminotransferase from Chlorobaculum parvum (strain DSM 263 / NCIMB 8327) (Chlorobium vibrioforme subsp. thiosulfatophilum).